A 123-amino-acid polypeptide reads, in one-letter code: Periplasmic [Fe] hydrogenase small subunit (123 aa).

Positions 1–34 (MQIASITRRGFLKVACVTTGAALIGIRMTGKAVA) form a signal peptide, tat-type signal. The disordered stretch occupies residues 103 to 123 (TTAGKLPNPRASEFEGPYPYE).

In terms of assembly, heterodimer of a large and a small subunit. Post-translationally, predicted to be exported by the Tat system. The position of the signal peptide cleavage has been experimentally proven.

The protein localises to the periplasm. The enzyme catalyses H2 + 2 oxidized [2Fe-2S]-[ferredoxin] = 2 reduced [2Fe-2S]-[ferredoxin] + 2 H(+). In terms of biological role, may be involved in hydrogen uptake for the reduction of sulfate to hydrogen sulfide in an electron transport chain. Cytochrome c3 is likely to be the physiological electron carrier for the enzyme. In Nitratidesulfovibrio vulgaris (strain ATCC 29579 / DSM 644 / CCUG 34227 / NCIMB 8303 / VKM B-1760 / Hildenborough) (Desulfovibrio vulgaris), this protein is Periplasmic [Fe] hydrogenase small subunit (hydB).